A 137-amino-acid polypeptide reads, in one-letter code: Large ribosomal subunit protein uL16 (137 aa).

Belongs to the universal ribosomal protein uL16 family. Part of the 50S ribosomal subunit.

Binds 23S rRNA and is also seen to make contacts with the A and possibly P site tRNAs. In Rhizobium rhizogenes (strain K84 / ATCC BAA-868) (Agrobacterium radiobacter), this protein is Large ribosomal subunit protein uL16.